Consider the following 236-residue polypeptide: Urease accessory protein UreF (236 aa).

It belongs to the UreF family. As to quaternary structure, ureD, UreF and UreG form a complex that acts as a GTP-hydrolysis-dependent molecular chaperone, activating the urease apoprotein by helping to assemble the nickel containing metallocenter of UreC. The UreE protein probably delivers the nickel.

It localises to the cytoplasm. Required for maturation of urease via the functional incorporation of the urease nickel metallocenter. The polypeptide is Urease accessory protein UreF (Granulibacter bethesdensis (strain ATCC BAA-1260 / CGDNIH1)).